Here is a 267-residue protein sequence, read N- to C-terminus: uncharacterized protein (267 aa).

The stretch at Asp37–Tyr62 forms a coiled coil.

This is an uncharacterized protein from Acanthamoeba polyphaga (Amoeba).